The sequence spans 596 residues: Pentatricopeptide repeat-containing protein At5g38730 (596 aa).

12 PPR repeats span residues 132–166, 167–201, 202–236, 237–271, 272–302, 306–340, 341–375, 376–410, 411–445, 446–480, 481–515, and 516–550; these read VSHV…GLKP, HLQA…GVVA, NIHV…GVFP, DIFT…GVAP, NIVT…IKDD, NHVT…GFSP, GVVT…KIEP, DNIT…GLKL, DMYS…GFSP, GYAT…GLCA, DVAL…GLVG, and DSVI…RLMV.

Belongs to the PPR family. P subfamily.

The protein is Pentatricopeptide repeat-containing protein At5g38730 of Arabidopsis thaliana (Mouse-ear cress).